Here is a 924-residue protein sequence, read N- to C-terminus: Isoleucine--tRNA ligase (924 aa).

The 'HIGH' region signature appears at 58 to 68 (PYANGQIHVGH). L-isoleucyl-5'-AMP is bound at residue Glu561. Positions 602–606 (KMSKS) match the 'KMSKS' region motif. Lys605 is a binding site for ATP. 4 residues coordinate Zn(2+): Cys887, Cys890, Cys907, and Cys910.

The protein belongs to the class-I aminoacyl-tRNA synthetase family. IleS type 1 subfamily. In terms of assembly, monomer. Zn(2+) is required as a cofactor.

The protein resides in the cytoplasm. The enzyme catalyses tRNA(Ile) + L-isoleucine + ATP = L-isoleucyl-tRNA(Ile) + AMP + diphosphate. Functionally, catalyzes the attachment of isoleucine to tRNA(Ile). As IleRS can inadvertently accommodate and process structurally similar amino acids such as valine, to avoid such errors it has two additional distinct tRNA(Ile)-dependent editing activities. One activity is designated as 'pretransfer' editing and involves the hydrolysis of activated Val-AMP. The other activity is designated 'posttransfer' editing and involves deacylation of mischarged Val-tRNA(Ile). The sequence is that of Isoleucine--tRNA ligase from Dichelobacter nodosus (strain VCS1703A).